The following is a 367-amino-acid chain: Methylthioribose-1-phosphate isomerase (367 aa).

The active-site Proton donor is Asp-250.

The protein belongs to the eIF-2B alpha/beta/delta subunits family. MtnA subfamily.

The protein localises to the cytoplasm. It is found in the nucleus. The catalysed reaction is 5-(methylsulfanyl)-alpha-D-ribose 1-phosphate = 5-(methylsulfanyl)-D-ribulose 1-phosphate. The protein operates within amino-acid biosynthesis; L-methionine biosynthesis via salvage pathway; L-methionine from S-methyl-5-thio-alpha-D-ribose 1-phosphate: step 1/6. Functionally, catalyzes the interconversion of methylthioribose-1-phosphate (MTR-1-P) into methylthioribulose-1-phosphate (MTRu-1-P). This chain is Methylthioribose-1-phosphate isomerase (IDI2), found in Hordeum vulgare (Barley).